A 448-amino-acid polypeptide reads, in one-letter code: UPF0210 protein PAE3581 (448 aa).

It belongs to the UPF0210 family.

In Pyrobaculum aerophilum (strain ATCC 51768 / DSM 7523 / JCM 9630 / CIP 104966 / NBRC 100827 / IM2), this protein is UPF0210 protein PAE3581.